The chain runs to 893 residues: Sperm-associated antigen 1 (893 aa).

Positions 112-126 (ENTRHFHDPEKHPGV) are enriched in basic and acidic residues. The tract at residues 112-155 (ENTRHFHDPEKHPGVEDPLPPVRGSNSCPRGGKETSSKSKTAKK) is disordered. 3 TPR repeats span residues 213 to 246 (ANRE…LPTA), 247 to 279 (TAYN…EPGN), and 280 to 313 (IKAL…EPDN). Disordered stretches follow at residues 324–344 (EREL…KRMV), 349–368 (ENSG…DDGV), and 373–437 (MGNI…SRGN). Serine 351 carries the phosphoserine modification. Positions 403 to 415 (QEGQPETGTASTS) are enriched in polar residues. Residues 416 to 437 (DNHDLEERRAADSPGDLKSRGN) show a composition bias toward basic and acidic residues. TPR repeat units lie at residues 429 to 463 (PGDL…EPTG), 471 to 504 (SILY…QPFA), 506 to 538 (KPLL…DCRI), 605 to 638 (FQAL…NSKA), and 639 to 672 (CAIY…DSKN). 630 to 637 (ECLKINSK) provides a ligand contact to GTP. Residue serine 703 is modified to Phosphoserine. Residues 704-756 (PDSSEAARHLDTKNDTAPPSRERERRRIEIQEVDDSSDEEPERPAEASAVEEG) are disordered. Residues 708–733 (EAARHLDTKNDTAPPSRERERRRIEI) show a composition bias toward basic and acidic residues. Positions 734–744 (QEVDDSSDEEP) are enriched in acidic residues. Serine 739, serine 740, and serine 758 each carry phosphoserine.

In terms of tissue distribution, testis and sperm.

Its subcellular location is the cytoplasm. It localises to the dynein axonemal particle. In terms of biological role, may play a role in the cytoplasmic assembly of the ciliary dynein arms. Binds GTP and has GTPase activity. Plays a role in fertilization. The sequence is that of Sperm-associated antigen 1 (Spag1) from Rattus norvegicus (Rat).